Consider the following 134-residue polypeptide: Cytochrome b5 (134 aa).

Ala2 is subject to N-acetylalanine. 3 positions are modified to N6-acetyllysine: Lys7, Lys10, and Lys19. In terms of domain architecture, Cytochrome b5 heme-binding spans 9–85 (VKYYTLEEIQ…SKTYIIGELH (77 aa)). Heme contacts are provided by His44 and His68. A helical transmembrane segment spans residues 109–131 (WWTNWVIPAISALAVALMYRLYM).

It belongs to the cytochrome b5 family.

Its subcellular location is the endoplasmic reticulum membrane. It localises to the microsome membrane. Functionally, cytochrome b5 is a membrane-bound hemoprotein functioning as an electron carrier for several membrane-bound oxygenases. It is also involved in several steps of the sterol biosynthesis pathway, particularly in the C-5 double bond introduction during the C-5 desaturation. The polypeptide is Cytochrome b5 (Cyb5a) (Mus musculus (Mouse)).